We begin with the raw amino-acid sequence, 131 residues long: Large ribosomal subunit protein bL12 (131 aa).

The protein belongs to the bacterial ribosomal protein bL12 family. Homodimer. Part of the ribosomal stalk of the 50S ribosomal subunit. Forms a multimeric L10(L12)X complex, where L10 forms an elongated spine to which 2 to 4 L12 dimers bind in a sequential fashion. Binds GTP-bound translation factors.

Its function is as follows. Forms part of the ribosomal stalk which helps the ribosome interact with GTP-bound translation factors. Is thus essential for accurate translation. The sequence is that of Large ribosomal subunit protein bL12 from Prochlorococcus marinus (strain NATL1A).